The primary structure comprises 192 residues: Thymidine kinase (192 aa).

ATP is bound by residues 9–16 and 87–90; these read SAMNAGKS and DECQ. Residue glutamate 88 is the Proton acceptor of the active site. Positions 145, 147, 182, and 185 each coordinate Zn(2+).

Belongs to the thymidine kinase family. As to quaternary structure, homotetramer.

The protein localises to the cytoplasm. It catalyses the reaction thymidine + ATP = dTMP + ADP + H(+). In Vibrio parahaemolyticus serotype O3:K6 (strain RIMD 2210633), this protein is Thymidine kinase.